We begin with the raw amino-acid sequence, 421 residues long: Phosphatidylinositol 5-phosphate 4-kinase type-2 gamma (421 aa).

A2 is modified (N-acetylalanine). S26 bears the Phosphoserine mark. Residues 43–420 (AADPLVGVFL…RFLDFITNIF (378 aa)) form the PIPK domain. Residues 69-75 (VMLLPDD) form a required for interaction with PIP5K1A region. The residue at position 349 (S349) is a Phosphoserine.

In terms of assembly, interacts with PIP5K1A; the interaction inhibits PIP5K1A kinase activity. Phosphorylated, phosphorylation is induced by EGF.

The protein resides in the endoplasmic reticulum. Its subcellular location is the cytoplasm. It catalyses the reaction a 1,2-diacyl-sn-glycero-3-phospho-(1D-myo-inositol-5-phosphate) + ATP = a 1,2-diacyl-sn-glycero-3-phospho-(1D-myo-inositol-4,5-bisphosphate) + ADP + H(+). The catalysed reaction is 1,2-dihexadecanoyl-sn-glycero-3-phospho-(1D-myo-inositol-5-phosphate) + ATP = 1,2-dihexadecanoyl-sn-glycero-3-phospho-(1D-myo-inositol-4,5-bisphosphate) + ADP + H(+). The enzyme catalyses 1,2-dihexadecanoyl-sn-glycero-3-phospho-(1D-myo-inositol-5-phosphate) + GTP = 1,2-dihexadecanoyl-sn-glycero-3-phospho-(1D-myo-inositol-4,5-bisphosphate) + GDP + H(+). In terms of biological role, phosphatidylinositol 5-phosphate 4-kinase with low enzymatic activity. May be a GTP sensor, has higher GTP-dependent kinase activity than ATP-dependent kinase activity. PIP4Ks negatively regulate insulin signaling through a catalytic-independent mechanism. They interact with PIP5Ks and suppress PIP5K-mediated PtdIns(4,5)P2 synthesis and insulin-dependent conversion to PtdIns(3,4,5)P3. This chain is Phosphatidylinositol 5-phosphate 4-kinase type-2 gamma, found in Homo sapiens (Human).